A 663-amino-acid polypeptide reads, in one-letter code: Translation factor GUF1, mitochondrial (663 aa).

The N-terminal 44 residues, 1-44, are a transit peptide targeting the mitochondrion; that stretch reads MRGCLQSVRWLTTALRRPAPQLSCLPFQPFASTSRLFSSCASRA. In terms of domain architecture, tr-type G spans 65-245; the sequence is ERFRNFCIVA…TIVEQIPAPV (181 aa). Residues 74-81, 138-142, and 192-195 each bind GTP; these read AHVDHGKS, DTPGH, and NKVD.

The protein belongs to the TRAFAC class translation factor GTPase superfamily. Classic translation factor GTPase family. LepA subfamily.

It localises to the mitochondrion inner membrane. It catalyses the reaction GTP + H2O = GDP + phosphate + H(+). Functionally, promotes mitochondrial protein synthesis. May act as a fidelity factor of the translation reaction, by catalyzing a one-codon backward translocation of tRNAs on improperly translocated ribosomes. Binds to mitochondrial ribosomes in a GTP-dependent manner. The chain is Translation factor GUF1, mitochondrial from Coccidioides posadasii (strain C735) (Valley fever fungus).